The following is a 678-amino-acid chain: AAC-rich mRNA clone AAC4 protein (678 aa).

Low complexity predominate over residues asparagine 55–asparagine 73. The disordered stretch occupies residues asparagine 55–serine 75. Residues isoleucine 243 to tyrosine 263 form a helical membrane-spanning segment. Over residues asparagine 318–asparagine 346 the composition is skewed to low complexity. Positions asparagine 318–glutamine 347 are disordered.

The protein resides in the membrane. This Dictyostelium discoideum (Social amoeba) protein is AAC-rich mRNA clone AAC4 protein (AAC4).